A 408-amino-acid polypeptide reads, in one-letter code: Menaquinone reductase (408 aa).

FAD is bound by residues 13–17 (GAGPA), 46–49 (CGDG), arginine 103, alanine 127, aspartate 290, and 302–303 (GI).

This sequence belongs to the geranylgeranyl reductase family. FAD serves as cofactor.

It catalyses the reaction menaquinone-9 + AH2 = beta-dihydromenaquinone-9 + A. The protein operates within quinol/quinone metabolism; menaquinone biosynthesis. Functionally, catalyzes the reduction of a single double bond in the isoprenoid tail of menaquinone (MK-9) in M.tuberculosis, likely the beta-isoprene unit, forming the predominant form of menaquinone found in mycobacteria, MK-9(II-H2). This chain is Menaquinone reductase, found in Mycobacterium tuberculosis (strain CDC 1551 / Oshkosh).